Consider the following 241-residue polypeptide: MGQKVNPIGLRLGINRTWDSRWFANTGEYGKLLHEDIKIRKYLEKELKQAAISKVVIERPHKKCRVTIHAARPGLIIGKKGADIEKLRKKLMEMTKSETHLNIVEVRKPEIDATLVAQSIAQQLERRIAFRRAMKRAVQSAMRLGAEGIRINCSGRLGGAEIARMEWYREGRVPLHTLRADVDYGTAEANTAYGICGVKVWVFKGEILEHDPMASERRATEGDAAHGGGGDRERGRRRENA.

The 69-residue stretch at 39 to 107 folds into the KH type-2 domain; sequence IRKYLEKELK…ETHLNIVEVR (69 aa). A disordered region spans residues 214 to 241; that stretch reads ASERRATEGDAAHGGGGDRERGRRRENA.

Belongs to the universal ribosomal protein uS3 family. Part of the 30S ribosomal subunit. Forms a tight complex with proteins S10 and S14.

Binds the lower part of the 30S subunit head. Binds mRNA in the 70S ribosome, positioning it for translation. The polypeptide is Small ribosomal subunit protein uS3 (Mesorhizobium japonicum (strain LMG 29417 / CECT 9101 / MAFF 303099) (Mesorhizobium loti (strain MAFF 303099))).